A 301-amino-acid polypeptide reads, in one-letter code: MHIHPNFDPVAIHLGPLAVRWYGLMYLVAFIMAIVVGRLRLRLPHVAAQGWTPKDIDDMLFYGVLGTILGGRFGYVLFYKASWYFAHPLDVFKVWEGGMSFHGGFLGVTFAMILFAWQRKRTWLQVTDFVAPMVPAGLAAGRLGNFINGELWGRVTSPDAPWAMLFPGAANEDAGWLVTHPAQAAQWHLADVFAQYHMLPRHPSQLYEIALEGVVLFLVLWLFSRKPRPVGAASAVFLIGYGLARFTVEFAREPDDFLGLLALGLSMGQWLSLPMIIAGVVMLLWAYRRNGRSAAQAAGVS.

7 helical membrane passes run 17–37 (LAVR…IVVG), 59–79 (MLFY…VLFY), 97–117 (GGMS…LFAW), 129–149 (FVAP…FING), 203–223 (PSQL…LWLF), 230–250 (VGAA…TVEF), and 257–277 (FLGL…PMII). Arg-142 contacts a 1,2-diacyl-sn-glycero-3-phospho-(1'-sn-glycerol).

The protein belongs to the Lgt family.

It is found in the cell inner membrane. The catalysed reaction is L-cysteinyl-[prolipoprotein] + a 1,2-diacyl-sn-glycero-3-phospho-(1'-sn-glycerol) = an S-1,2-diacyl-sn-glyceryl-L-cysteinyl-[prolipoprotein] + sn-glycerol 1-phosphate + H(+). The protein operates within protein modification; lipoprotein biosynthesis (diacylglyceryl transfer). Functionally, catalyzes the transfer of the diacylglyceryl group from phosphatidylglycerol to the sulfhydryl group of the N-terminal cysteine of a prolipoprotein, the first step in the formation of mature lipoproteins. The polypeptide is Phosphatidylglycerol--prolipoprotein diacylglyceryl transferase (Paraburkholderia phymatum (strain DSM 17167 / CIP 108236 / LMG 21445 / STM815) (Burkholderia phymatum)).